A 122-amino-acid polypeptide reads, in one-letter code: Small ribosomal subunit protein uS13 (122 aa).

Positions arginine 99–lysine 122 are disordered.

It belongs to the universal ribosomal protein uS13 family. Part of the 30S ribosomal subunit. Forms a loose heterodimer with protein S19. Forms two bridges to the 50S subunit in the 70S ribosome.

Functionally, located at the top of the head of the 30S subunit, it contacts several helices of the 16S rRNA. In the 70S ribosome it contacts the 23S rRNA (bridge B1a) and protein L5 of the 50S subunit (bridge B1b), connecting the 2 subunits; these bridges are implicated in subunit movement. Contacts the tRNAs in the A and P-sites. The polypeptide is Small ribosomal subunit protein uS13 (Bradyrhizobium sp. (strain BTAi1 / ATCC BAA-1182)).